Here is a 356-residue protein sequence, read N- to C-terminus: GDP-mannose 4,6 dehydratase (356 aa).

NADP(+)-binding positions include 12–17, 69–70, 91–95, and Tyr-106; these read GITGQD, DL, and LGAQS. Residue Thr-138 is part of the active site. Catalysis depends on nucleophile residues Glu-140 and Tyr-162. Residues Lys-166, His-192, and Arg-197 each contribute to the NADP(+) site.

Belongs to the NAD(P)-dependent epimerase/dehydratase family. GDP-mannose 4,6-dehydratase subfamily. Requires NADP(+) as cofactor.

The catalysed reaction is GDP-alpha-D-mannose = GDP-4-dehydro-alpha-D-rhamnose + H2O. Its pathway is nucleotide-sugar biosynthesis; GDP-L-fucose biosynthesis via de novo pathway; GDP-L-fucose from GDP-alpha-D-mannose: step 1/2. In terms of biological role, participates in the synthesis of GDP-L-fucose, catalyzing the conversion of GDP-D-mannose to GDP-4-dehydro-6-deoxy-D-mannose (GDP-4-dehydro-alpha-D-rhamnose) which is further catalyzed by GDP-L-fucose synthase (ger). GDP-L-fucose is important for the synthesis of fucosylated N-glycans which are expressed on the cell surface. In Dictyostelium discoideum (Social amoeba), this protein is GDP-mannose 4,6 dehydratase (gmd).